We begin with the raw amino-acid sequence, 131 residues long: Large ribosomal subunit protein bL12 (131 aa).

This sequence belongs to the bacterial ribosomal protein bL12 family. Homodimer. Part of the ribosomal stalk of the 50S ribosomal subunit. Forms a multimeric L10(L12)X complex, where L10 forms an elongated spine to which 2 to 4 L12 dimers bind in a sequential fashion. Binds GTP-bound translation factors.

Functionally, forms part of the ribosomal stalk which helps the ribosome interact with GTP-bound translation factors. Is thus essential for accurate translation. This chain is Large ribosomal subunit protein bL12, found in Prochlorococcus marinus (strain MIT 9215).